Consider the following 177-residue polypeptide: Large ribosomal subunit protein uL5 (177 aa).

Belongs to the universal ribosomal protein uL5 family. As to quaternary structure, part of the 50S ribosomal subunit; part of the 5S rRNA/L5/L18/L25 subcomplex. Contacts the 5S rRNA and the P site tRNA. Forms a bridge to the 30S subunit in the 70S ribosome.

This is one of the proteins that bind and probably mediate the attachment of the 5S RNA into the large ribosomal subunit, where it forms part of the central protuberance. In the 70S ribosome it contacts protein S13 of the 30S subunit (bridge B1b), connecting the 2 subunits; this bridge is implicated in subunit movement. Contacts the P site tRNA; the 5S rRNA and some of its associated proteins might help stabilize positioning of ribosome-bound tRNAs. This Ehrlichia canis (strain Jake) protein is Large ribosomal subunit protein uL5.